Reading from the N-terminus, the 317-residue chain is Glycine--tRNA ligase alpha subunit (317 aa).

This sequence belongs to the class-II aminoacyl-tRNA synthetase family. In terms of assembly, tetramer of two alpha and two beta subunits.

Its subcellular location is the cytoplasm. The catalysed reaction is tRNA(Gly) + glycine + ATP = glycyl-tRNA(Gly) + AMP + diphosphate. This Leptothrix cholodnii (strain ATCC 51168 / LMG 8142 / SP-6) (Leptothrix discophora (strain SP-6)) protein is Glycine--tRNA ligase alpha subunit.